A 486-amino-acid polypeptide reads, in one-letter code: Elastin-binding protein EbpS (486 aa).

The span at 1 to 40 (MSNNFKDDFEKNRQSIDTNSHQDHTEDVEKDQSELEHQDT) shows a compositional bias: basic and acidic residues. The tract at residues 1–314 (MSNNFKDDFE…NHDRDKERKK (314 aa)) is disordered. Topologically, residues 2–204 (SNNFKDDFEK…ESKDHHSGKK (203 aa)) are extracellular. Residues 14-34 (QSIDTNSHQDHTEDVEKDQSE) form an elastin-binding region. A compositionally biased stretch (polar residues) spans 64 to 85 (TNHNKQVHNESQTSEDNVQNEA). 2 stretches are compositionally biased toward basic and acidic residues: residues 103–118 (EPSH…EEYY) and 126–149 (DKSH…ENNT). Over residues 150–166 (EHSTVSDKSIAEQSQQP) the composition is skewed to polar residues. The segment covering 180–199 (SKDKHDDVTVKQDKDESKDH) has biased composition (basic and acidic residues). Low complexity-rich tracts occupy residues 204 to 225 (KGAA…MGVS) and 233 to 246 (DAQN…SNNS). A helical transmembrane segment spans residues 205-225 (GAAIGAGTAGVAGAAGAMGVS). Over 226–319 (KAKKHSNDAQ…KERKKGGMAK (94 aa)) the chain is Cytoplasmic. The segment covering 247 to 259 (TEDKASQDKSKDH) has biased composition (basic and acidic residues). The span at 278-297 (GAASKSASAASKPHASNNAS) shows a compositional bias: low complexity. The span at 299–314 (NHDEHDNHDRDKERKK) shows a compositional bias: basic and acidic residues. Residues 320–340 (VLLPLIAAVLIIGALAIFGGM) traverse the membrane as a helical segment. The Extracellular segment spans residues 341–486 (ALNNHNNGTK…IRNGQQIVIP (146 aa)). Residues 351 to 440 (ENKIANTNKN…QRQGGGQRHT (90 aa)) form a disordered region. Basic and acidic residues predominate over residues 361–398 (NADESKDKDTSKDASKDKSKSTDSDKSKEDQDKATKDE). The segment covering 403 to 431 (QNNANQANNQAQNNQNQQQANQNQQQQQQ) has biased composition (low complexity). In terms of domain architecture, LysM spans 437–485 (QRHTVNGQENLYRIAIQYYGSGSPENVEKIRRANGLSGNNIRNGQQIVI).

It is found in the cell membrane. Functionally, promotes binding of soluble elastin peptides and tropoelastin to S.aureus cells although it is not able to promote bacterial adherence to immobilized elastin and, therefore, is not a microbial surface component recognizing adhesive matrix molecule (MSCRAMM). This chain is Elastin-binding protein EbpS (ebpS), found in Staphylococcus aureus (strain Mu50 / ATCC 700699).